A 195-amino-acid polypeptide reads, in one-letter code: Insertion element IS136 uncharacterized protein Atu4601 (195 aa).

The 170-residue stretch at 25-194 (MVMRSNLRWC…SPRQFIRAKS (170 aa)) folds into the Integrase catalytic domain.

This Agrobacterium fabrum (strain C58 / ATCC 33970) (Agrobacterium tumefaciens (strain C58)) protein is Insertion element IS136 uncharacterized protein Atu4601.